The primary structure comprises 750 residues: Rho GTPase-activating protein 9 (750 aa).

Positions 22–88 (PRGSQLCALY…PAAYMIEESI (67 aa)) constitute an SH3 domain. Disordered regions lie at residues 120-187 (ALPS…LMSE) and 242-319 (WKPP…LLDD). Over residues 163 to 180 (RSLSQEDLPSEASASTAG) the composition is skewed to polar residues. A WW domain is found at 213–247 (LQRLDAWEQHLDPNSGRCFYINSLTGCKSWKPPRR). Polar residues-rich tracts occupy residues 251 to 270 (ETNPGSMEGTQTLKRNNDVL) and 291 to 300 (GSLSLSQRTS). The segment covering 301 to 317 (QLDPPALQAPRPLPQLL) has biased composition (low complexity). Residues 322–435 (EVEKSGLLNM…WHRALRTVIE (114 aa)) form the PH domain. Lipid binding stretches follow at residues 342–345 (RKNW), 397–399 (SSR), and 432–669 (TVIE…CLSQ). Basic and acidic residues predominate over residues 446-462 (EAPTGRDQGSGDRENPL). The tract at residues 446–488 (EAPTGRDQGSGDRENPLELRLSGSGPAELSAGEDEEEESELVS) is disordered. Serine 475 carries the post-translational modification Phosphoserine. A compositionally biased stretch (acidic residues) spans 476–485 (AGEDEEEESE). Phosphoserine is present on serine 500. The Rho-GAP domain maps to 542–749 (CQLESLCQRE…LMLTNFTSLF (208 aa)).

In terms of assembly, interacts with FASLG. As to expression, predominantly expressed in peripheral blood leukocytes, spleen, and thymus.

GTPase activator for the Rho-type GTPases by converting them to an inactive GDP-bound state. Has a substantial GAP activity toward CDC42 and RAC1 and less toward RHOA. Has a role in regulating adhesion of hematopoietic cells to the extracellular matrix. Binds phosphoinositides, and has the highest affinity for phosphatidylinositol 3,4,5-trisphosphate, followed by phosphatidylinositol 3,4-bisphosphate and phosphatidylinositol 4,5-bisphosphate. This chain is Rho GTPase-activating protein 9 (ARHGAP9), found in Homo sapiens (Human).